A 362-amino-acid chain; its full sequence is DNA replication and repair protein RecF (362 aa).

30 to 37 is an ATP binding site; sequence GLNAQGKS.

The protein belongs to the RecF family.

Its subcellular location is the cytoplasm. Its function is as follows. The RecF protein is involved in DNA metabolism; it is required for DNA replication and normal SOS inducibility. RecF binds preferentially to single-stranded, linear DNA. It also seems to bind ATP. The sequence is that of DNA replication and repair protein RecF from Thermoanaerobacter sp. (strain X514).